Consider the following 28-residue polypeptide: 3-phytase B (28 aa).

Residues 1–28 (RDPTGCEVDQVIMVKRHGERYPSPSAGK) form a disordered region. His17 functions as the Nucleophile in the catalytic mechanism.

The protein belongs to the histidine acid phosphatase family.

The catalysed reaction is 1D-myo-inositol hexakisphosphate + H2O = 1D-myo-inositol 1,2,4,5,6-pentakisphosphate + phosphate. In terms of biological role, catalyzes the hydrolysis of inorganic orthophosphate from phytate. In Aspergillus ficuum, this protein is 3-phytase B (phyB).